Reading from the N-terminus, the 143-residue chain is Large ribosomal subunit protein uL11 (143 aa).

Belongs to the universal ribosomal protein uL11 family. As to quaternary structure, part of the ribosomal stalk of the 50S ribosomal subunit. Interacts with L10 and the large rRNA to form the base of the stalk. L10 forms an elongated spine to which L12 dimers bind in a sequential fashion forming a multimeric L10(L12)X complex. Post-translationally, one or more lysine residues are methylated.

Forms part of the ribosomal stalk which helps the ribosome interact with GTP-bound translation factors. This Kineococcus radiotolerans (strain ATCC BAA-149 / DSM 14245 / SRS30216) protein is Large ribosomal subunit protein uL11.